A 396-amino-acid polypeptide reads, in one-letter code: MPVVLVVNSGSSSFKYQLIEMDTESVLASGLVERIGEPTGSTRHKAGGDSWERELPIADHTAGFQAMLDAFAEHGPSLEEEPPVAVGHRVVHGGDVFVEPTVVTDDVKADIDDLSALAPLHNPGALQGIAAAQTAFPDVPHVAVFDTAFHQTLPAEAYTYAIDRELAAAHRIRRYGFHGTSHKFVSEAAARLLGKPLEETRIIVLHLGNGASAAAVQGGRSIDTSMGLTPLEGLVMGTRSGDIDPAILFHLARHTDLGLDDLETLLNRRSGLLGLTGLGDMRDVQRAAADGDEAAQTALGVYRHRIRHYVGAYAAQLGGVDAVVFTAGVGENNPLVRRRSLAGLEFMGIGIDDDRNELISSEARFVSPEGSPVAVLVIPTDEELEIARQSLAATAG.

Asn-8 contacts Mg(2+). Lys-15 is an ATP binding site. Substrate is bound at residue Arg-89. Catalysis depends on Asp-146, which acts as the Proton donor/acceptor. ATP-binding positions include 206–210 (HLGNG), 280–282 (DMR), and 328–332 (GVGEN). Glu-382 lines the Mg(2+) pocket.

This sequence belongs to the acetokinase family. In terms of assembly, homodimer. It depends on Mg(2+) as a cofactor. Requires Mn(2+) as cofactor.

The protein resides in the cytoplasm. It carries out the reaction acetate + ATP = acetyl phosphate + ADP. It participates in metabolic intermediate biosynthesis; acetyl-CoA biosynthesis; acetyl-CoA from acetate: step 1/2. Catalyzes the formation of acetyl phosphate from acetate and ATP. Can also catalyze the reverse reaction. The polypeptide is Acetate kinase (Clavibacter michiganensis subsp. michiganensis (strain NCPPB 382)).